We begin with the raw amino-acid sequence, 396 residues long: Elongation factor Tu (396 aa).

The region spanning 10–206 (KPHVNIGTIG…AVDSYIPEPV (197 aa)) is the tr-type G domain. The G1 stretch occupies residues 19–26 (GHVDHGKT). 19–26 (GHVDHGKT) contributes to the GTP binding site. Threonine 26 provides a ligand contact to Mg(2+). The G2 stretch occupies residues 60 to 64 (GITIA). The tract at residues 81-84 (DCPG) is G3. Residues 81–85 (DCPGH) and 136–139 (NKAD) each bind GTP. A G4 region spans residues 136-139 (NKAD). Residues 174–176 (SAL) form a G5 region.

Belongs to the TRAFAC class translation factor GTPase superfamily. Classic translation factor GTPase family. EF-Tu/EF-1A subfamily. Monomer.

It localises to the cytoplasm. It catalyses the reaction GTP + H2O = GDP + phosphate + H(+). In terms of biological role, GTP hydrolase that promotes the GTP-dependent binding of aminoacyl-tRNA to the A-site of ribosomes during protein biosynthesis. The protein is Elongation factor Tu of Geotalea uraniireducens (strain Rf4) (Geobacter uraniireducens).